Reading from the N-terminus, the 64-residue chain is Large ribosomal subunit protein bL35 (64 aa).

Residues 1–22 (MPKMKSHTGMGKRVRVTGKGKI) are compositionally biased toward basic residues. The interval 1 to 28 (MPKMKSHTGMGKRVRVTGKGKIVKQQAG) is disordered.

It belongs to the bacterial ribosomal protein bL35 family.

The sequence is that of Large ribosomal subunit protein bL35 from Salinispora tropica (strain ATCC BAA-916 / DSM 44818 / JCM 13857 / NBRC 105044 / CNB-440).